The chain runs to 285 residues: Protein HEXIM1 (285 aa).

Disordered regions lie at residues 1-56 and 132-196; these read MSEV…QNPG and LMED…LQKD. Residues 23–36 are compositionally biased toward basic and acidic residues; it reads GGWHHPVEREEHPV. The span at 168–180 shows a compositional bias: acidic residues; the sequence is TDDDLEEEEDEAG. Residues 213–284 adopt a coiled-coil conformation; the sequence is SKQDLIKEYL…QEGKQVAADS (72 aa).

This sequence belongs to the HEXIM family. As to quaternary structure, homooligomer and heterooligomer. Core component of the 7SK RNP complex.

The protein localises to the nucleus. Its subcellular location is the cytoplasm. Its function is as follows. Transcriptional regulator which functions as a general RNA polymerase II transcription inhibitor. Core component of the 7SK RNP complex: in cooperation with 7SK snRNA sequesters P-TEFb in a large inactive 7SK snRNP complex preventing RNA polymerase II phosphorylation and subsequent transcriptional elongation. Plays a role in the regulation of DNA virus-mediated innate immune response by assembling into the HDP-RNP complex, a complex that serves as a platform for IRF3 phosphorylation and subsequent innate immune response activation through the cGAS-STING pathway. This chain is Protein HEXIM1 (hexim1), found in Xenopus laevis (African clawed frog).